A 165-amino-acid chain; its full sequence is MISVATAECFTHGKIGIKIHKMACGYREFEKDPNYSIINGNVFVIASMFLPSKKGIESILDVKLPEPDYVFKYSKAYNQENDILVAKMVANALKNKLNCDIAISSTAGVGNGAICILTDKNEYNFTSDIYGDLIKGENILKRQDNGVNKAFNTFVEILKKEYGLK.

Belongs to the UPF0254 family.

The protein is UPF0254 protein MmarC6_1720 of Methanococcus maripaludis (strain C6 / ATCC BAA-1332).